A 220-amino-acid polypeptide reads, in one-letter code: Pyridoxine/pyridoxamine 5'-phosphate oxidase (220 aa).

Substrate is bound by residues 13-16 (RVEY) and lysine 77. Residues 72–77 (RTVLCK), 87–88 (FT), lysine 94, and glutamine 116 each bind FMN. Substrate contacts are provided by tyrosine 134, arginine 138, and serine 142. Residues 151-152 (QS) and tryptophan 197 contribute to the FMN site. Residue 203–205 (RVH) coordinates substrate. Arginine 207 provides a ligand contact to FMN.

Belongs to the pyridoxamine 5'-phosphate oxidase family. In terms of assembly, homodimer. FMN is required as a cofactor.

The catalysed reaction is pyridoxamine 5'-phosphate + O2 + H2O = pyridoxal 5'-phosphate + H2O2 + NH4(+). It catalyses the reaction pyridoxine 5'-phosphate + O2 = pyridoxal 5'-phosphate + H2O2. Its pathway is cofactor metabolism; pyridoxal 5'-phosphate salvage; pyridoxal 5'-phosphate from pyridoxamine 5'-phosphate: step 1/1. It participates in cofactor metabolism; pyridoxal 5'-phosphate salvage; pyridoxal 5'-phosphate from pyridoxine 5'-phosphate: step 1/1. Catalyzes the oxidation of either pyridoxine 5'-phosphate (PNP) or pyridoxamine 5'-phosphate (PMP) into pyridoxal 5'-phosphate (PLP). This Mycobacterium sp. (strain KMS) protein is Pyridoxine/pyridoxamine 5'-phosphate oxidase.